The primary structure comprises 195 residues: Granulocyte colony-stimulating factor (195 aa).

Residues 1-21 (MKLMALQLLLWHIALWMVPEA) form the signal peptide. Intrachain disulfides connect Cys-57/Cys-63 and Cys-85/Cys-95. O-linked (GalNAc...) threonine glycosylation occurs at Thr-154.

It belongs to the IL-6 superfamily. Monomer. Post-translationally, O-glycosylated.

The protein localises to the secreted. In terms of biological role, granulocyte/macrophage colony-stimulating factors are cytokines that act in hematopoiesis by controlling the production, differentiation, and function of 2 related white cell populations of the blood, the granulocytes and the monocytes-macrophages. This CSF induces granulocytes. This is Granulocyte colony-stimulating factor (CSF3) from Sus scrofa (Pig).